The sequence spans 232 residues: ATP-dependent dethiobiotin synthetase BioD (232 aa).

Glycine 16–valine 21 lines the ATP pocket. Threonine 20 contributes to the Mg(2+) binding site. Lysine 41 is an active-site residue. Residue threonine 45 participates in substrate binding. Residues aspartate 52, glutamate 111–glycine 114, asparagine 171–glutamine 172, proline 200–serine 202, and glutamate 207 each bind ATP. Aspartate 52 and glutamate 111 together coordinate Mg(2+).

It belongs to the dethiobiotin synthetase family. Homodimer. Mg(2+) is required as a cofactor.

It is found in the cytoplasm. The enzyme catalyses (7R,8S)-7,8-diammoniononanoate + CO2 + ATP = (4R,5S)-dethiobiotin + ADP + phosphate + 3 H(+). It carries out the reaction (7R,8S)-8-amino-7-(carboxyamino)nonanoate + ATP = (4R,5S)-dethiobiotin + ADP + phosphate + H(+). Its pathway is cofactor biosynthesis; biotin biosynthesis; biotin from 7,8-diaminononanoate: step 1/2. Catalyzes a mechanistically unusual reaction, the ATP-dependent insertion of CO2 between the N7 and N8 nitrogen atoms of 7,8-diaminopelargonic acid (DAPA, also called 7,8-diammoniononanoate) to form a ureido ring. This archaea does not encode bioA (which catalyzes the formation of the precursor for this reaction in the cannonical pathway), instead it encodes bioU, which replaces bioA and also performs the first half of the cannonical BioD reaction. Thus in this archaea BioD has a different substrate. The protein is ATP-dependent dethiobiotin synthetase BioD of Haloferax mediterranei (strain ATCC 33500 / DSM 1411 / JCM 8866 / NBRC 14739 / NCIMB 2177 / R-4) (Halobacterium mediterranei).